Consider the following 68-residue polypeptide: MVYYPELLVWVSQEPFPYKEMEGGLTKGRLPVPKEVNRKKMDEPIAASLIPPGNHEPGSPAIGYLHPF.

As to quaternary structure, interacts with FLNA. Interacts with the latency-associated peptides (LAP) of TGFB1 and TGFB2; the interaction results in a decrease in TGFB autoinduction. In terms of processing, phosphorylated on Ser-59. Phosphorylation decreases stability and activity.

Its subcellular location is the cytoplasm. May have roles in neural function. Ectopic expression promotes axonal regeneration. Also augments motility of gliomas. May also have roles in cellular differentiation. Induces differentiation of fibroblast into myofibroblast and myofibroblast ameboid migration. Increases retinoic-acid regulation of lipid-droplet biogenesis. Down-regulates the expression of TGFB1 and TGFB2 but not of TGFB3. May play a role in the regulation of alveolar generation. The sequence is that of Neuronal regeneration-related protein (Nrep) from Rattus norvegicus (Rat).